A 173-amino-acid polypeptide reads, in one-letter code: Putative phosphoesterase GTNG_0743 (173 aa).

His-34 (proton donor) is an active-site residue. 2 short sequence motifs (HXTX) span residues His-34–Leu-37 and His-115–Ile-118. The Proton acceptor role is filled by His-115.

This sequence belongs to the 2H phosphoesterase superfamily. YjcG family.

The polypeptide is Putative phosphoesterase GTNG_0743 (Geobacillus thermodenitrificans (strain NG80-2)).